The chain runs to 494 residues: Glycerol kinase 1 (494 aa).

Thr12 contacts ADP. Thr12, Thr13, and Ser14 together coordinate ATP. Thr12 is a binding site for sn-glycerol 3-phosphate. An ADP-binding site is contributed by Arg16. 4 residues coordinate sn-glycerol 3-phosphate: Arg82, Glu83, Tyr134, and Asp243. Positions 82, 83, 134, 243, and 244 each coordinate glycerol. Positions 265 and 308 each coordinate ADP. ATP contacts are provided by Thr265, Gly308, Gln312, and Gly408. ADP contacts are provided by Gly408 and Asn412.

Belongs to the FGGY kinase family.

The enzyme catalyses glycerol + ATP = sn-glycerol 3-phosphate + ADP + H(+). The protein operates within polyol metabolism; glycerol degradation via glycerol kinase pathway; sn-glycerol 3-phosphate from glycerol: step 1/1. Inhibited by fructose 1,6-bisphosphate (FBP). Functionally, key enzyme in the regulation of glycerol uptake and metabolism. Catalyzes the phosphorylation of glycerol to yield sn-glycerol 3-phosphate. The sequence is that of Glycerol kinase 1 from Pseudomonas aeruginosa (strain ATCC 15692 / DSM 22644 / CIP 104116 / JCM 14847 / LMG 12228 / 1C / PRS 101 / PAO1).